Consider the following 203-residue polypeptide: Small ribosomal subunit protein uS4 (203 aa).

Residues 20–44 (LPGLTRKRPKNTNPPGMHGAERKKK) are disordered. The 64-residue stretch at 92–155 (MRLDCIVFRL…SSRKLVAAYA (64 aa)) folds into the S4 RNA-binding domain.

The protein belongs to the universal ribosomal protein uS4 family. Part of the 30S ribosomal subunit. Contacts protein S5. The interaction surface between S4 and S5 is involved in control of translational fidelity.

Its function is as follows. One of the primary rRNA binding proteins, it binds directly to 16S rRNA where it nucleates assembly of the body of the 30S subunit. In terms of biological role, with S5 and S12 plays an important role in translational accuracy. The protein is Small ribosomal subunit protein uS4 of Synechococcus sp. (strain JA-2-3B'a(2-13)) (Cyanobacteria bacterium Yellowstone B-Prime).